The following is a 404-amino-acid chain: MARAIIIVIDSLGIGYSPDAVDFGDVGANTFANLARAYYEETGKEIFLPNLSALGMIKACEQASNQTFPYQGQEPSKGAYGFAQEISTGKDTPSGHWEMAGVPVLFDWGYFTDKNSSFPTSLIDDINRETGFDGILGNCHASGTEILTRLGQEHIETGLPICYTSADSVFQIAAHEEHFGLDNLYKYCETVRELLGDLNIGRVIARPFVGDSADNFARTGNRRDYSVLPPAPTVLDKISQEGTHVISVGKIADIFAHQGIDEKTKATGLNALFDATLDHINTAQDNSLIFTNLVNFDQDFGHRRDAIGYAKELEALDVRIPELFHAMSAEDVLFLTADHGCDPTWPGTEHTREYVPIIAYHHQIDSVNLGNRKTFADLGQSVAELFNVEAMDYGTSFLSEIYSK.

Positions 10, 297, 302, 338, 339, and 350 each coordinate Mn(2+).

Belongs to the phosphopentomutase family. The cofactor is Mn(2+).

The protein localises to the cytoplasm. It carries out the reaction 2-deoxy-alpha-D-ribose 1-phosphate = 2-deoxy-D-ribose 5-phosphate. The catalysed reaction is alpha-D-ribose 1-phosphate = D-ribose 5-phosphate. It functions in the pathway carbohydrate degradation; 2-deoxy-D-ribose 1-phosphate degradation; D-glyceraldehyde 3-phosphate and acetaldehyde from 2-deoxy-alpha-D-ribose 1-phosphate: step 1/2. Its function is as follows. Isomerase that catalyzes the conversion of deoxy-ribose 1-phosphate (dRib-1-P) and ribose 1-phosphate (Rib-1-P) to deoxy-ribose 5-phosphate (dRib-5-P) and ribose 5-phosphate (Rib-5-P), respectively. The protein is Phosphopentomutase of Colwellia psychrerythraea (strain 34H / ATCC BAA-681) (Vibrio psychroerythus).